A 148-amino-acid chain; its full sequence is Transcriptional regulator MraZ (148 aa).

SpoVT-AbrB domains follow at residues 5-51 (VSIL…PEPN) and 80-123 (AETL…NAEE).

The protein belongs to the MraZ family. Forms oligomers.

It localises to the cytoplasm. Its subcellular location is the nucleoid. The polypeptide is Transcriptional regulator MraZ (Chromobacterium violaceum (strain ATCC 12472 / DSM 30191 / JCM 1249 / CCUG 213 / NBRC 12614 / NCIMB 9131 / NCTC 9757 / MK)).